The sequence spans 260 residues: Snake venom serine protease homolog 1 (260 aa).

An N-terminal signal peptide occupies residues Met-1 to Ala-18. Residues Gln-19–Leu-24 constitute a propeptide that is removed on maturation. One can recognise a Peptidase S1 domain in the interval Val-25 to Ala-251. Disulfide bonds link Cys-31-Cys-165, Cys-52-Cys-68, Cys-100-Cys-258, Cys-144-Cys-212, Cys-176-Cys-191, and Cys-202-Cys-227. The N-linked (GlcNAc...) asparagine glycan is linked to Asn-253.

The protein belongs to the peptidase S1 family. Snake venom subfamily. As to expression, expressed by the venom gland.

The protein resides in the secreted. Functionally, snake venom serine protease homolog that may act in the hemostasis system of the prey. The protein is Snake venom serine protease homolog 1 of Bitis gabonica (Gaboon adder).